Consider the following 549-residue polypeptide: Undecaprenyl phosphate-alpha-4-amino-4-deoxy-L-arabinose arabinosyl transferase 2 (549 aa).

A run of 12 helical transmembrane segments spans residues 9 to 29, 80 to 102, 112 to 132, 133 to 153, 176 to 196, 204 to 224, 259 to 279, 290 to 310, 312 to 332, 342 to 362, 377 to 397, and 402 to 422; these read LLLG…GLWI, LFGV…FLIA, SFVC…AGYA, NLDP…WFAL, FMTK…PWML, LLLY…PWAL, FYLP…PVAF, GIAF…LSNG, LPTY…HALA, ALGL…IGLV, SLVL…LQAF, and CWAA…AALP.

This sequence belongs to the glycosyltransferase 83 family.

The protein localises to the cell inner membrane. It catalyses the reaction 4-amino-4-deoxy-alpha-L-arabinopyranosyl di-trans,octa-cis-undecaprenyl phosphate + lipid IVA = lipid IIA + di-trans,octa-cis-undecaprenyl phosphate.. Its pathway is lipopolysaccharide metabolism; 4-amino-4-deoxy-beta-L-arabinose-lipid A biosynthesis. In terms of biological role, catalyzes the transfer of the L-Ara4N moiety of the glycolipid undecaprenyl phosphate-alpha-L-Ara4N to lipid A. The modified arabinose is attached to lipid A and is required for resistance to polymyxin and cationic antimicrobial peptides. The protein is Undecaprenyl phosphate-alpha-4-amino-4-deoxy-L-arabinose arabinosyl transferase 2 of Pseudomonas fluorescens (strain Pf0-1).